The chain runs to 419 residues: Monooxygenase CTB7 (419 aa).

The protein belongs to the aromatic-ring hydroxylase family. KMO subfamily.

It participates in mycotoxin biosynthesis. Functionally, monooxygenase; part of the gene cluster that mediates the biosynthesis of cercosporin, a light-activated, non-host-selective toxin. The perylenequinone chromophore of cercosporin absorbs light energy to attain an electronically-activated triplet state and produces active oxygen species such as the hydroxyl radical, superoxide, hydrogen peroxide or singlet oxygen upon reaction with oxygen molecules. These reactive oxygen species cause damage to various cellular components including lipids, proteins and nucleic acids. The first step of cercosporin biosynthesis is performed by the polyketide synthase CTB1 which catalyzes the formation of nor-toralactone. The starter unit acyltransferase (SAT) domain of CTB1 initiates polyketide extension by the selective utilization of acetyl-CoA, which is elongated to the heptaketide in the beta-ketoacyl synthase (KS) domain by successive condensations with six malonyl units introduced by the malonyl acyltransferase (MAT) domain. The product template (PT) domain catalyzes C4-C9 and C2-C11 aldol cyclizations and dehydrations to a trihydroxynaphthalene, which is thought to be delivered to the thioesterase (TE) domain for product release. The bifunctional enzyme CTB3 then methylates nor-toralactone to toralactone before conducting an unusual oxidative aromatic ring opening. The O-methyltransferase CTB2 further methylates the nascent OH-6 of the CBT3 product, blocking further oxidation at this site before the reductase CTB6 reduces the 2-oxopropyl ketone at position C7, giving naphthalene. The FAD-dependent monooxygenase CTB5 in concert with the multicopper oxidase CTB12 are responsible for homodimerization of naphthalene with CTB7 installing the dioxepine moiety, finally producing cercosporin. The fasciclin domain-containing protein CTB11 might act with CTB5 and CTB12 whereas the roles of CTB9 and CTB10 have still to be elucidated. This chain is Monooxygenase CTB7, found in Cercospora beticola (Sugarbeet leaf spot fungus).